Consider the following 420-residue polypeptide: Cysteate-C-fatty acyltransferase (420 aa).

Pyridoxal 5'-phosphate contacts are provided by residues 114–115 (GY), H219, T247, and A249. K250 is modified (N6-(pyridoxal phosphate)lysine).

The protein belongs to the class-II pyridoxal-phosphate-dependent aminotransferase family. Pyridoxal 5'-phosphate is required as a cofactor.

It carries out the reaction isopentadecanoyl-CoA + L-cysteate + H(+) = 3-oxocapnine + CO2 + CoA. The protein operates within lipid metabolism. Transferase involved in the biosynthesis of capnine, a sulfonolipid present in the outer membrane of gliding Bacteroidetes and essential for gliding motility. Catalyzes the formation of 3-dehydrocapnine from cysteate and isopentadecanoyl-CoA (13-methyl-myristoyl-CoA). In vitro, products are also detected when 13-methyl-myristic acid is substituted with tridecylic acid, myristic acid, pentadecanoic acid or palmitic acid. The protein is Cysteate-C-fatty acyltransferase of Capnocytophaga ochracea (strain ATCC 27872 / DSM 7271 / CCUG 9716 / JCM 12966 / NCTC 12371 / SS31 / VPI 2845) (Bacteroides ochraceus).